The following is a 102-amino-acid chain: Small ribosomal subunit protein uS14m (102 aa).

This sequence belongs to the universal ribosomal protein uS14 family.

It localises to the mitochondrion. The polypeptide is Small ribosomal subunit protein uS14m (RPS14) (Paramecium tetraurelia).